Reading from the N-terminus, the 292-residue chain is Protoheme IX farnesyltransferase (292 aa).

The next 9 membrane-spanning stretches (helical) occupy residues 12–32 (ITWL…PQAS), 43–63 (LLRL…TAAL), 94–114 (LAFG…GVNL), 115–135 (LSAG…TPMK), 144–164 (VGAI…AGGL), 169–189 (WVLF…IAWM), 216–236 (IVIY…LGMS), 239–259 (LYLV…VRVA), and 267–287 (ARGV…LMLL).

It belongs to the UbiA prenyltransferase family. Protoheme IX farnesyltransferase subfamily.

It localises to the cell inner membrane. The enzyme catalyses heme b + (2E,6E)-farnesyl diphosphate + H2O = Fe(II)-heme o + diphosphate. It participates in porphyrin-containing compound metabolism; heme O biosynthesis; heme O from protoheme: step 1/1. In terms of biological role, converts heme B (protoheme IX) to heme O by substitution of the vinyl group on carbon 2 of heme B porphyrin ring with a hydroxyethyl farnesyl side group. This chain is Protoheme IX farnesyltransferase, found in Solibacter usitatus (strain Ellin6076).